The chain runs to 358 residues: Adenosine deaminase (358 aa).

His14 and His16 together coordinate Zn(2+). Residues His16, Asp18, and Gly183 each coordinate substrate. His212 contacts Zn(2+). Glu215 serves as the catalytic Proton donor. Asp294 serves as a coordination point for Zn(2+). Asp295 provides a ligand contact to substrate.

This sequence belongs to the metallo-dependent hydrolases superfamily. Adenosine and AMP deaminases family. It depends on Zn(2+) as a cofactor.

It is found in the cell membrane. It localises to the cell junction. The protein localises to the cytoplasmic vesicle lumen. Its subcellular location is the cytoplasm. The protein resides in the lysosome. It carries out the reaction adenosine + H2O + H(+) = inosine + NH4(+). It catalyses the reaction 2'-deoxyadenosine + H2O + H(+) = 2'-deoxyinosine + NH4(+). Functionally, catalyzes the hydrolytic deamination of adenosine and 2-deoxyadenosine. Plays an important role in purine metabolism and in adenosine homeostasis. Modulates signaling by extracellular adenosine, and so contributes indirectly to cellular signaling events. May act as a positive regulator of T-cell coactivation. This Xenopus laevis (African clawed frog) protein is Adenosine deaminase (ada).